Reading from the N-terminus, the 189-residue chain is uncharacterized protein (189 aa).

This is an uncharacterized protein from Human adenovirus B serotype 7 (HAdV-7).